A 599-amino-acid chain; its full sequence is BICD family-like cargo adapter 1 (599 aa).

The interval methionine 1 to glycine 27 is disordered. The CC1 box motif lies at alanine 76–glycine 80. Residues glycine 80–leucine 341 are a coiled coil. The interval aspartate 352 to alanine 375 is disordered. Residues glutamate 405–arginine 536 are a coiled coil.

This sequence belongs to the BICDR family. As to quaternary structure, part of a tripartite complex with dynein and dynactin, acts an adapter linking the dynein motor complex and dynactin. Interacts with KIF1C. Interacts with RAB6A and RAB6B; interaction is specific to Rab6.

It localises to the cytoplasm. The protein resides in the cytoskeleton. It is found in the microtubule organizing center. The protein localises to the centrosome. Its function is as follows. Acts as an adapter protein linking the dynein motor complex to various cargos and converts dynein from a non-processive to a highly processive motor in the presence of dynactin. Facilitates the interaction between dynein and dynactin and activates dynein processivity (the ability to move along a microtubule for a long distance without falling off the track). Predominantly recruits 2 dyneins, which increases both the force and speed of the microtubule motor. Component of secretory vesicle machinery in developing neurons that acts as a regulator of neurite outgrowth. Regulates the secretory vesicle transport by controlling the accumulation of Rab6-containing secretory vesicles in the pericentrosomal region restricting anterograde secretory transport during the early phase of neuronal differentiation, thereby inhibiting neuritogenesis. This is BICD family-like cargo adapter 1 (bicdl1) from Xenopus tropicalis (Western clawed frog).